A 226-amino-acid chain; its full sequence is Choline transport system permease protein OpuBD (226 aa).

Positions 22–202 (FGRHFLMSAY…VMAVGADLLM (181 aa)) constitute an ABC transmembrane type-1 domain. Transmembrane regions (helical) follow at residues 27 to 47 (LMSAYGVLFAAVVGVPAGILI), 52 to 72 (RLSAWVFAVTNVIQTIPALAM), 73 to 93 (LAVLMLVMGLGANTVILSLFL), 148 to 168 (ALVIAIGITAIGTFVGAGGLG), and 182 to 202 (AIILAGAIPTAVMAVGADLLM).

The protein belongs to the binding-protein-dependent transport system permease family. CysTW subfamily.

The protein localises to the cell membrane. Its function is as follows. Involved in a high affinity multicomponent binding-protein-dependent transport system for choline; probably responsible for the translocation of the substrate across the membrane. The chain is Choline transport system permease protein OpuBD (opuBD) from Bacillus subtilis (strain 168).